The primary structure comprises 360 residues: Alanine racemase (360 aa).

The active-site Proton acceptor; specific for D-alanine is the K36. Residue K36 is modified to N6-(pyridoxal phosphate)lysine. Residue R132 participates in substrate binding. Catalysis depends on Y256, which acts as the Proton acceptor; specific for L-alanine. A substrate-binding site is contributed by M304.

The protein belongs to the alanine racemase family. Requires pyridoxal 5'-phosphate as cofactor.

The catalysed reaction is L-alanine = D-alanine. It participates in amino-acid biosynthesis; D-alanine biosynthesis; D-alanine from L-alanine: step 1/1. In terms of biological role, catalyzes the interconversion of L-alanine and D-alanine. May also act on other amino acids. In Pasteurella multocida (strain Pm70), this protein is Alanine racemase (alr).